The chain runs to 23 residues: Septenin 2b (23 aa).

In terms of tissue distribution, expressed in skin glands.

It is found in the secreted. In terms of biological role, may act as an antimicrobial peptide. The chain is Septenin 2b from Osteopilus septentrionalis (Cuban treefrog).